Here is a 279-residue protein sequence, read N- to C-terminus: Aquaporin A (279 aa).

Over 1 to 40 the chain is Cytoplasmic; sequence MVKVVPLRFITYDPLKDPSKMIYRRPISKPVKAFKGFFSE. A helical membrane pass occupies residues 41 to 61; it reads FLGTLYLVYFCGGSVCAAFAV. Over 62 to 69 the chain is Extracellular; the sequence is AGDSAARA. A helical membrane pass occupies residues 70 to 90; that stretch reads LLGGLIQGMALAALIWAVSGV. At 91-114 the chain is on the cytoplasmic side; it reads SGCNLNPAVTLANLLSGRVGLIDS. The short motif at 96 to 98 is the NPA 1 element; sequence NPA. The chain crosses the membrane as a helical span at residues 115-135; sequence LYYVAAQILGCIAGAGILYGC. Over 136–158 the chain is Extracellular; sequence LPNMYRIDLGVPHLAPGMNTGQA. Residues 159–179 traverse the membrane as a helical segment; the sequence is FLMEMMLTSILCLCVLGTSVF. The Cytoplasmic segment spans residues 180 to 188; it reads NVWDRRLNR. The chain crosses the membrane as a helical span at residues 189–209; the sequence is IAPFAIGLALFIGVAIGFNFS. Residues 210-227 lie on the Extracellular side of the membrane; that stretch reads GGALNPVRVLGPSIISGV. The NPA 2 signature appears at 214 to 216; it reads NPV. The helical transmembrane segment at 228-248 threads the bilayer; that stretch reads WSHHWVYWLGPIVGAILAAFI. Residues 249–279 lie on the Cytoplasmic side of the membrane; the sequence is YRCLLQERFDVIERPGYIAPLIDPSTAVSSY.

The protein belongs to the MIP/aquaporin (TC 1.A.8) family.

It is found in the cell membrane. May form a water-specific channel. Required for prolonged spore survival on fruiting bodies. The polypeptide is Aquaporin A (aqpA) (Dictyostelium discoideum (Social amoeba)).